The following is a 1001-amino-acid chain: uncharacterized protein (1001 aa).

Basic and acidic residues predominate over residues 939–948; it reads KVVDNKRDAS. Residues 939–1001 are disordered; that stretch reads KVVDNKRDAS…HTSKRVQKKN (63 aa). S948 and S950 each carry phosphoserine.

This is an uncharacterized protein from Schizosaccharomyces pombe (strain 972 / ATCC 24843) (Fission yeast).